Consider the following 322-residue polypeptide: Sideroflexin-2 (322 aa).

N-acetylmethionine is present on methionine 1. Transmembrane regions (helical) follow at residues 99–119 (GMLI…VIFW), 147–167 (ALSY…MNMW), 174–194 (LVGR…NIPM), 223–243 (VGIA…MILL), and 266–286 (LQVL…CGLF).

The protein belongs to the sideroflexin family. In terms of tissue distribution, expressed in brain, heart, kidney, spleen, thymus, liver, stomach and skin.

The protein resides in the mitochondrion inner membrane. Its subcellular location is the mitochondrion outer membrane. It catalyses the reaction L-serine(in) = L-serine(out). Functionally, mitochondrial amino-acid transporter that mediates transport of serine into mitochondria. Involved in mitochondrial iron homeostasis by regulating heme biosynthesis. This Mus musculus (Mouse) protein is Sideroflexin-2.